The primary structure comprises 349 residues: Phenylalanine--tRNA ligase alpha subunit (349 aa).

Glu262 lines the Mg(2+) pocket.

Belongs to the class-II aminoacyl-tRNA synthetase family. Phe-tRNA synthetase alpha subunit type 1 subfamily. In terms of assembly, tetramer of two alpha and two beta subunits. Mg(2+) serves as cofactor.

Its subcellular location is the cytoplasm. The enzyme catalyses tRNA(Phe) + L-phenylalanine + ATP = L-phenylalanyl-tRNA(Phe) + AMP + diphosphate + H(+). The chain is Phenylalanine--tRNA ligase alpha subunit from Sorangium cellulosum (strain So ce56) (Polyangium cellulosum (strain So ce56)).